We begin with the raw amino-acid sequence, 596 residues long: Elongation factor 4 (596 aa).

Residues 2–183 (KNIRNFSIIA…AIITRIPAPN (182 aa)) form the tr-type G domain. Residues 14 to 19 (DHGKST) and 130 to 133 (NKID) contribute to the GTP site.

This sequence belongs to the TRAFAC class translation factor GTPase superfamily. Classic translation factor GTPase family. LepA subfamily.

It is found in the cell inner membrane. It catalyses the reaction GTP + H2O = GDP + phosphate + H(+). In terms of biological role, required for accurate and efficient protein synthesis under certain stress conditions. May act as a fidelity factor of the translation reaction, by catalyzing a one-codon backward translocation of tRNAs on improperly translocated ribosomes. Back-translocation proceeds from a post-translocation (POST) complex to a pre-translocation (PRE) complex, thus giving elongation factor G a second chance to translocate the tRNAs correctly. Binds to ribosomes in a GTP-dependent manner. The protein is Elongation factor 4 of Campylobacter concisus (strain 13826).